Here is a 234-residue protein sequence, read N- to C-terminus: Filarial antigen Av33 (234 aa).

Residues Met1–Gly17 form the signal peptide. An intrachain disulfide couples Cys135 to Cys230. Residues Thr204–Tyr234 are disordered. Over residues Thr211–Pro220 the composition is skewed to low complexity.

This sequence belongs to the protease inhibitor I33 family.

It localises to the secreted. Its function is as follows. Aspartyl protease inhibitor. This is Filarial antigen Av33 from Acanthocheilonema viteae (Filarial nematode worm).